The following is a 728-amino-acid chain: Golgin subfamily A member 5 (728 aa).

Ser-2 is subject to N-acetylserine. Over 2–695 the chain is Cytoplasmic; it reads SWFADLAGRA…IFLRRYPIAR (694 aa). Dimethylated arginine occurs at positions 27 and 89. The segment at 88-202 is disordered; the sequence is SRTGGDASHP…KKSTEESTVS (115 aa). Ser-116 carries the post-translational modification Phosphoserine. Residues 134 to 146 show a composition bias toward basic and acidic residues; it reads PTGRVEIKKEKGK. Residues 152 to 167 are compositionally biased toward low complexity; that stretch reads SSQSSAVSSVTTSVTT. Residues 173–187 are compositionally biased toward polar residues; the sequence is ENSGSQSPEVSSSDS. Positions 216–628 form a coiled coil; that stretch reads GSMSHELSNL…LEQQLHSAAT (413 aa). A helical; Anchor for type IV membrane protein membrane pass occupies residues 696 to 716; that stretch reads VFVIIYMALLHLWVMIVLLTY. Residues 717-728 are Lumenal-facing; the sequence is SPEMHHDQPYGK.

As to quaternary structure, homodimer. Interacts with RAB1A that has been activated by GTP-binding. Interacts with isoform CASP of CUX1. Post-translationally, highly phosphorylated during mitosis. Phosphorylation is barely detectable during interphase.

Its subcellular location is the golgi apparatus membrane. Its function is as follows. Involved in maintaining Golgi structure. Stimulates the formation of Golgi stacks and ribbons. Involved in intra-Golgi retrograde transport. The protein is Golgin subfamily A member 5 (Golga5) of Rattus norvegicus (Rat).